The primary structure comprises 97 residues: MTSSPVSRVVYNGKRNSSHRSPPNSSEIFTPAHEENVRFIYEAWQGVERDLRSQMSGSERGLVEEYVEKVPNPSLKTFRPIDLSDLKRRNTQDAKKS.

The tract at residues 1–30 (MTSSPVSRVVYNGKRNSSHRSPPNSSEIFT) is disordered. A Phosphoserine modification is found at Ser-21. Thr-30 carries the post-translational modification Phosphothreonine. A Phosphotyrosine modification is found at Tyr-41. Residues 77-97 (TFRPIDLSDLKRRNTQDAKKS) form a disordered region. Positions 80–84 (PIDLS) match the PXDLS motif motif. Positions 82–97 (DLSDLKRRNTQDAKKS) are enriched in basic and acidic residues.

This sequence belongs to the MCRIP family. Interacts (unphosphorylated form, via the PXDLS motif) with CTBP1, competitively inhibiting CTBP-ZEB1 interaction. Interacts with CTBP2. Interacts with MCRIP2. Interacts with DDX6. Post-translationally, phosphorylation by MAPK3/1 (ERK1/2) regulates MCRIP1 binding to CTBP(s).

It is found in the nucleus. The protein resides in the cytoplasm. It localises to the stress granule. Functionally, the phosphorylation status of MCRIP1 functions as a molecular switch to regulate epithelial-mesenchymal transition. Unphosphorylated MCRIP1 binds to and inhibits the transcriptional corepressor CTBP(s). When phosphorylated by MAPK/ERK, MCRIP1 releases CTBP(s) resulting in transcriptional silencing of the E-cadherin gene and induction of epithelial-mesenchymal transition. The protein is Mapk-regulated corepressor-interacting protein 1 (MCRIP1) of Bos taurus (Bovine).